The primary structure comprises 128 residues: uncharacterized protein (128 aa).

The first 24 residues, 1-24 (MKMTKLTTLLLTATLGLASGAALA), serve as a signal peptide directing secretion. Low complexity-rich tracts occupy residues 24–44 (AAES…NAGQ) and 52–70 (NVAP…GNTN). Residues 24-128 (AAESNAQSSN…VNTKTDGTTQ (105 aa)) are disordered. Residues 71-82 (STMQHPDGSTMN) show a composition bias toward polar residues. Over residues 85–110 (GMTKDEEHKNTMCKDGRCPDINKKVE) the composition is skewed to basic and acidic residues. Positions 113–128 (NGVNNDVNTKTDGTTQ) are enriched in polar residues.

This is an uncharacterized protein from Salmonella typhi.